Consider the following 502-residue polypeptide: Glycerol kinase (502 aa).

Residue Thr-14 participates in ADP binding. Residues Thr-14, Thr-15, and Ser-16 each contribute to the ATP site. Thr-14 serves as a coordination point for sn-glycerol 3-phosphate. Arg-18 serves as a coordination point for ADP. Residues Arg-84, Glu-85, and Tyr-136 each contribute to the sn-glycerol 3-phosphate site. The glycerol site is built by Arg-84, Glu-85, and Tyr-136. A Phosphohistidine; by HPr modification is found at His-232. Position 246 (Asp-246) interacts with sn-glycerol 3-phosphate. Positions 246 and 247 each coordinate glycerol. ADP is bound by residues Thr-268 and Gly-311. ATP contacts are provided by Thr-268, Gly-311, Gln-315, and Gly-412. 2 residues coordinate ADP: Gly-412 and Asn-416.

This sequence belongs to the FGGY kinase family. As to quaternary structure, homotetramer and homodimer (in equilibrium). Post-translationally, the phosphoenolpyruvate-dependent sugar phosphotransferase system (PTS), including enzyme I, and histidine-containing protein (HPr) are required for the phosphorylation, which leads to the activation of the enzyme.

The enzyme catalyses glycerol + ATP = sn-glycerol 3-phosphate + ADP + H(+). It participates in polyol metabolism; glycerol degradation via glycerol kinase pathway; sn-glycerol 3-phosphate from glycerol: step 1/1. Activated by phosphorylation and inhibited by fructose 1,6-bisphosphate (FBP). Key enzyme in the regulation of glycerol uptake and metabolism. Catalyzes the phosphorylation of glycerol to yield sn-glycerol 3-phosphate. This chain is Glycerol kinase, found in Streptococcus gordonii (strain Challis / ATCC 35105 / BCRC 15272 / CH1 / DL1 / V288).